The sequence spans 172 residues: 3-hydroxydecanoyl-[acyl-carrier-protein] dehydratase (172 aa).

His-71 is a catalytic residue.

This sequence belongs to the thioester dehydratase family. FabA subfamily. Homodimer.

It is found in the cytoplasm. The catalysed reaction is a (3R)-hydroxyacyl-[ACP] = a (2E)-enoyl-[ACP] + H2O. It catalyses the reaction (3R)-hydroxydecanoyl-[ACP] = (2E)-decenoyl-[ACP] + H2O. The enzyme catalyses (2E)-decenoyl-[ACP] = (3Z)-decenoyl-[ACP]. Its pathway is lipid metabolism; fatty acid biosynthesis. Functionally, necessary for the introduction of cis unsaturation into fatty acids. Catalyzes the dehydration of (3R)-3-hydroxydecanoyl-ACP to E-(2)-decenoyl-ACP and then its isomerization to Z-(3)-decenoyl-ACP. Can catalyze the dehydratase reaction for beta-hydroxyacyl-ACPs with saturated chain lengths up to 16:0, being most active on intermediate chain length. This chain is 3-hydroxydecanoyl-[acyl-carrier-protein] dehydratase, found in Escherichia fergusonii (strain ATCC 35469 / DSM 13698 / CCUG 18766 / IAM 14443 / JCM 21226 / LMG 7866 / NBRC 102419 / NCTC 12128 / CDC 0568-73).